Reading from the N-terminus, the 457-residue chain is Acetylcholine receptor subunit alpha (457 aa).

An N-terminal signal peptide occupies residues 1–20; that stretch reads MEPRPLLLLLGLCSAGLVLG. At 21-230 the chain is on the extracellular side; that stretch reads SEHETRLVAK…ITYHFVMQRL (210 aa). 2 disulfides stabilise this stretch: cysteine 148–cysteine 162 and cysteine 212–cysteine 213. Asparagine 161 carries an N-linked (GlcNAc...) asparagine glycan. The next 3 helical transmembrane spans lie at 231 to 255, 263 to 281, and 297 to 316; these read PLYF…VFYL, MTLS…LVIV, and YMLF…VIVI. Topologically, residues 317-428 are cytoplasmic; sequence NTHHRSPSTH…WKYVAMVMDH (112 aa). The chain crosses the membrane as a helical span at residues 429–447; that stretch reads ILLAVFMLVCIIGTLAVFA.

It belongs to the ligand-gated ion channel (TC 1.A.9) family. Acetylcholine receptor (TC 1.A.9.1) subfamily. Alpha-1/CHRNA1 sub-subfamily. In terms of assembly, one of the alpha chains that assemble within the acetylcholine receptor, a pentamer of two alpha chains, a beta, a delta, and a gamma (in immature muscle) or epsilon (in mature muscle) chains. The muscle heteropentamer composed of alpha-1, beta-1, delta, epsilon subunits interacts with the alpha-conotoxin ImII.

It is found in the postsynaptic cell membrane. Its subcellular location is the cell membrane. The enzyme catalyses K(+)(in) = K(+)(out). It carries out the reaction Na(+)(in) = Na(+)(out). Upon acetylcholine binding, the AChR responds by an extensive change in conformation that affects all subunits and leads to opening of an ion-conducting channel across the plasma membrane. The chain is Acetylcholine receptor subunit alpha (CHRNA1) from Bos taurus (Bovine).